Consider the following 425-residue polypeptide: Serine--tRNA ligase (425 aa).

Disordered regions lie at residues 43–68 (QRSSLQAEGNRIGKEVGQRIQQGSDP) and 108–131 (LPNLPSPDCPEGRDENDNQERHCW). The segment covering 117 to 131 (PEGRDENDNQERHCW) has biased composition (basic and acidic residues). 233–235 (TAE) provides a ligand contact to L-serine. 264–266 (RRE) serves as a coordination point for ATP. Glutamate 287 provides a ligand contact to L-serine. 351–354 (EISS) serves as a coordination point for ATP. L-serine is bound at residue serine 385.

This sequence belongs to the class-II aminoacyl-tRNA synthetase family. Type-1 seryl-tRNA synthetase subfamily. In terms of assembly, homodimer. The tRNA molecule binds across the dimer.

The protein resides in the cytoplasm. The catalysed reaction is tRNA(Ser) + L-serine + ATP = L-seryl-tRNA(Ser) + AMP + diphosphate + H(+). It carries out the reaction tRNA(Sec) + L-serine + ATP = L-seryl-tRNA(Sec) + AMP + diphosphate + H(+). Its pathway is aminoacyl-tRNA biosynthesis; selenocysteinyl-tRNA(Sec) biosynthesis; L-seryl-tRNA(Sec) from L-serine and tRNA(Sec): step 1/1. Catalyzes the attachment of serine to tRNA(Ser). Is also able to aminoacylate tRNA(Sec) with serine, to form the misacylated tRNA L-seryl-tRNA(Sec), which will be further converted into selenocysteinyl-tRNA(Sec). This is Serine--tRNA ligase from Prochlorococcus marinus (strain MIT 9303).